We begin with the raw amino-acid sequence, 23 residues long: Defensin-like protein 2 (23 aa).

Pyrrolidone carboxylic acid is present on glutamine 1.

This sequence belongs to the DEFL family. As to quaternary structure, forms oligomers in its native state.

Possesses antifungal activity sensitive to inorganic cations. This Brassica napus (Rape) protein is Defensin-like protein 2.